A 305-amino-acid polypeptide reads, in one-letter code: Ribonucleoside-diphosphate reductase small subunit (305 aa).

Glu-64, Glu-94, and His-97 together coordinate Fe cation. Tyr-101 is a catalytic residue. A helical transmembrane segment spans residues 150-170 (ILMFLIVEGIYFISSFYSISL). The Fe cation site is built by Glu-157, Glu-191, and His-194.

This sequence belongs to the ribonucleoside diphosphate reductase small chain family. As to quaternary structure, heterotetramer composed of a homodimer of the large subunit (R1) and a homodimer of the small subunit (R2). Larger multisubunit protein complex are also active, composed of (R1)n(R2)n. The cofactor is Fe cation.

Its subcellular location is the host membrane. It carries out the reaction a 2'-deoxyribonucleoside 5'-diphosphate + [thioredoxin]-disulfide + H2O = a ribonucleoside 5'-diphosphate + [thioredoxin]-dithiol. In terms of biological role, ribonucleoside-diphosphate reductase holoenzyme provides the precursors necessary for viral DNA synthesis. Allows virus growth in non-dividing cells, as well as reactivation from latency in infected hosts. Catalyzes the biosynthesis of deoxyribonucleotides from the corresponding ribonucleotides. The polypeptide is Ribonucleoside-diphosphate reductase small subunit (Homo sapiens (Human)).